Here is a 645-residue protein sequence, read N- to C-terminus: Chlorophyllide a oxygenase, chloroplastic (645 aa).

The segment at 1–46 is disordered; it reads MLPASLQRKAAAVGGRGPTNQSRVAVRVSAQPKEAPPASTPIVEDP. Residues 105–218 are a coiled coil; the sequence is QARQKLEYLR…RKASDLDIKE (114 aa). A disordered region spans residues 258–287; the sequence is ATTVTQEVPSTSYGTPVDRAPRRSKAAIRR. Over residues 259–271 the composition is skewed to polar residues; it reads TTVTQEVPSTSYG. One can recognise a Rieske domain in the interval 305-406; the sequence is WYPAEFSARL…CAEKDGFIWV (102 aa). [2Fe-2S] cluster contacts are provided by Cys346, His348, Cys365, and His368. Fe cation-binding residues include Glu446, Asp450, His453, and His458.

The protein resides in the plastid. Its subcellular location is the chloroplast inner membrane. It localises to the chloroplast thylakoid membrane. The catalysed reaction is chlorophyllide a + 2 NADPH + 2 O2 + 2 H(+) = chlorophyllide b + 2 NADP(+) + 3 H2O. Its function is as follows. Catalyzes a two-step oxygenase reaction involved in the synthesis of chlorophyll b. Acts specifically on the non-esterified chlorophyllide a and not on chlorophyll a. This is Chlorophyllide a oxygenase, chloroplastic (CAO) from Chlamydomonas reinhardtii (Chlamydomonas smithii).